A 717-amino-acid polypeptide reads, in one-letter code: Fatty acid oxidation complex subunit alpha (717 aa).

An enoyl-CoA hydratase/isomerase region spans residues 1 to 189 (MIYQSPTIEV…NVGAIDALVA (189 aa)). Asp296 provides a ligand contact to substrate. Positions 311–717 (KKVNSAAVLG…ANNGSYYQQA (407 aa)) are 3-hydroxyacyl-CoA dehydrogenase. NAD(+) is bound by residues Met324, Asp343, 400–402 (VVE), Lys407, and Ser429. His450 functions as the For 3-hydroxyacyl-CoA dehydrogenase activity in the catalytic mechanism. Asn453 serves as a coordination point for NAD(+). Substrate-binding residues include Asn500 and Tyr660.

This sequence in the N-terminal section; belongs to the enoyl-CoA hydratase/isomerase family. In the C-terminal section; belongs to the 3-hydroxyacyl-CoA dehydrogenase family. In terms of assembly, heterotetramer of two alpha chains (FadB) and two beta chains (FadA).

It catalyses the reaction a (3S)-3-hydroxyacyl-CoA + NAD(+) = a 3-oxoacyl-CoA + NADH + H(+). The enzyme catalyses a (3S)-3-hydroxyacyl-CoA = a (2E)-enoyl-CoA + H2O. The catalysed reaction is a 4-saturated-(3S)-3-hydroxyacyl-CoA = a (3E)-enoyl-CoA + H2O. It carries out the reaction (3S)-3-hydroxybutanoyl-CoA = (3R)-3-hydroxybutanoyl-CoA. It catalyses the reaction a (3Z)-enoyl-CoA = a 4-saturated (2E)-enoyl-CoA. The enzyme catalyses a (3E)-enoyl-CoA = a 4-saturated (2E)-enoyl-CoA. It participates in lipid metabolism; fatty acid beta-oxidation. Involved in the aerobic and anaerobic degradation of long-chain fatty acids via beta-oxidation cycle. Catalyzes the formation of 3-oxoacyl-CoA from enoyl-CoA via L-3-hydroxyacyl-CoA. It can also use D-3-hydroxyacyl-CoA and cis-3-enoyl-CoA as substrate. The polypeptide is Fatty acid oxidation complex subunit alpha (Shewanella piezotolerans (strain WP3 / JCM 13877)).